We begin with the raw amino-acid sequence, 105 residues long: UPF0235 protein A1C_06510 (105 aa).

It belongs to the UPF0235 family.

The polypeptide is UPF0235 protein A1C_06510 (Rickettsia akari (strain Hartford)).